Here is a 620-residue protein sequence, read N- to C-terminus: Toxin coregulated pilus biosynthesis protein I (620 aa).

A Methyl-accepting transducer domain is found at T344–R580.

This sequence belongs to the methyl-accepting chemotaxis (MCP) protein family.

The protein localises to the cell inner membrane. Functionally, may function as an environmental regulator of TCP biogenesis. Negatively regulates the synthesis of the major pilin subunit of TCP (TcpA). The sequence is that of Toxin coregulated pilus biosynthesis protein I (tcpI) from Vibrio cholerae serotype O1 (strain ATCC 39315 / El Tor Inaba N16961).